A 203-amino-acid polypeptide reads, in one-letter code: 5-formyltetrahydrofolate cyclo-ligase (203 aa).

Ala2 is subject to N-acetylalanine. ATP-binding positions include 10-14 (KRSLR) and Arg14. Substrate-binding positions include Leu56, Glu61, and 148 to 152 (RGKGY). Position 145–153 (145–153 (RLGRGKGYY)) interacts with ATP. Positions 154 and 189 each coordinate Mg(2+).

Belongs to the 5-formyltetrahydrofolate cyclo-ligase family. As to quaternary structure, monomer. Requires Mg(2+) as cofactor.

The protein localises to the cytoplasm. The enzyme catalyses (6S)-5-formyl-5,6,7,8-tetrahydrofolate + ATP = (6R)-5,10-methenyltetrahydrofolate + ADP + phosphate. Its function is as follows. Contributes to tetrahydrofolate metabolism. Helps regulate carbon flow through the folate-dependent one-carbon metabolic network that supplies carbon for the biosynthesis of purines, thymidine and amino acids. Catalyzes the irreversible conversion of 5-formyltetrahydrofolate (5-FTHF) to yield 5,10-methenyltetrahydrofolate. The sequence is that of 5-formyltetrahydrofolate cyclo-ligase (MTHFS) from Homo sapiens (Human).